Reading from the N-terminus, the 76-residue chain is MSKFFRRRKFCKFTAEGVKEIDYKDLNTLRQYLTENGKIVPSRVTGTKSKYQRQLATAVKRARFLALIPYTDNHDI.

This sequence belongs to the bacterial ribosomal protein bS18 family. Part of the 30S ribosomal subunit. Forms a tight heterodimer with protein bS6.

Functionally, binds as a heterodimer with protein bS6 to the central domain of the 16S rRNA, where it helps stabilize the platform of the 30S subunit. In Stenotrophomonas maltophilia (strain R551-3), this protein is Small ribosomal subunit protein bS18.